The following is a 1370-amino-acid chain: DNA-directed RNA polymerase subunit beta (1370 aa).

The protein belongs to the RNA polymerase beta chain family. As to quaternary structure, the RNAP catalytic core consists of 2 alpha, 1 beta, 1 beta' and 1 omega subunit. When a sigma factor is associated with the core the holoenzyme is formed, which can initiate transcription.

It catalyses the reaction RNA(n) + a ribonucleoside 5'-triphosphate = RNA(n+1) + diphosphate. Functionally, DNA-dependent RNA polymerase catalyzes the transcription of DNA into RNA using the four ribonucleoside triphosphates as substrates. This chain is DNA-directed RNA polymerase subunit beta, found in Geotalea daltonii (strain DSM 22248 / JCM 15807 / FRC-32) (Geobacter daltonii).